The chain runs to 387 residues: MEGGGAPPADTVMSDAAPAPPQMGIENIPAVLSHGGRFIQYNIFGNIFEVTAKYKPPIMPIGKGAYGIVCSAHNSETNEHVAVKKIANAFDNKIDAKRTLREIKLLRHMDHENVVAIRDIVPPPQREVFNDVYIAYELMDTDLHQIIRSNQALSEEHCQYFLYQILRGLKYIHSANVLHRDLKPSNLLLNANCDLKICDFGLARVTSETDFMTEYVVTRWYRAPELLLNSSDYTAAIDVWSVGCIFMELMDRKPLFPGRDHVHQLRLLMELIGTPSEDDLGFLNENAKRYIRQLPPYRRQSFQEKFPHVHPEAIDLVEKMLTFDPRKRITVEDALAHPYLTSLHDISDEPVCMTPFSFDFEQHALTEEQMKELIYREALAFNPEYQQ.

The region spanning 55-340 (KPPIMPIGKG…VEDALAHPYL (286 aa)) is the Protein kinase domain. ATP contacts are provided by residues 61–69 (IGKGAYGIV) and Lys84. The active-site Proton acceptor is Asp181. The residue at position 213 (Thr213) is a Phosphothreonine. A TXY motif is present at residues 213 to 215 (TEY). Tyr215 is subject to Phosphotyrosine.

It belongs to the protein kinase superfamily. CMGC Ser/Thr protein kinase family. MAP kinase subfamily. Mg(2+) is required as a cofactor. In terms of processing, dually phosphorylated on Thr-213 and Tyr-215, which activates the enzyme. Autophosphorylated. As to expression, roots and stems.

The catalysed reaction is L-seryl-[protein] + ATP = O-phospho-L-seryl-[protein] + ADP + H(+). It carries out the reaction L-threonyl-[protein] + ATP = O-phospho-L-threonyl-[protein] + ADP + H(+). Its activity is regulated as follows. Activated by tyrosine and threonine phosphorylation. In terms of biological role, may play a role in the mitogenic induction of symbiotic root nodules on Alfalfa by Rhizobium signal molecules. This Medicago sativa (Alfalfa) protein is Mitogen-activated protein kinase homolog MMK1 (MMK1).